The sequence spans 344 residues: MPALPVIDIRSNHVEDSLPEQIIKGLTSQPKTLPPLLFYSNEGLEHWNHHSRQPDFYPRRQEIEILKQGGNDIARSIAPSSVILDLGSANLEKVGYLLEALEAQEKDVLYFALDISAPQLATTLKEIPSSNFRHVRFAGLHGTFEDGLRWINETPEIRDLPHCVLLLGLTIGNFSRQNAAAFLQNIANHALTGASKNKSSILLSLDSCKVPTKVTRAYTSDGVVPFALQALTYAKALLCDRIDNGIDEKVLSCNLRPEHWHYLSEWNFALGRHEASLIPRFGDVCLGSMLQDIVVKKDEKVRFACSYKYDAKERQKLFLDSGVDQGMVWTNEGCDVAIYELKLA.

Belongs to the methyltransferase superfamily. As to quaternary structure, homodimer.

It carries out the reaction 4-(3-methylbut-2-enyl)-L-tryptophan + S-adenosyl-L-methionine = 4-(3-methylbut-2-enyl)-L-abrine + S-adenosyl-L-homocysteine + H(+). It functions in the pathway alkaloid biosynthesis; ergot alkaloid biosynthesis. Functionally, 4-dimethylallyltryptophan N-methyltransferase; part of the gene cluster that mediates the biosynthesis of fungal ergot alkaloid. DmaW catalyzes the first step of ergot alkaloid biosynthesis by condensing dimethylallyl diphosphate (DMAP) and tryptophan to form 4-dimethylallyl-L-tryptophan. The second step is catalyzed by the methyltransferase easF that methylates 4-dimethylallyl-L-tryptophan in the presence of S-adenosyl-L-methionine, resulting in the formation of 4-dimethylallyl-L-abrine. The catalase easC and the FAD-dependent oxidoreductase easE then transform 4-dimethylallyl-L-abrine to chanoclavine-I which is further oxidized by easD in the presence of NAD(+), resulting in the formation of chanoclavine-I aldehyde. Agroclavine dehydrogenase easG then mediates the conversion of chanoclavine-I aldehyde to agroclavine via a non-enzymatic adduct reaction: the substrate is an iminium intermediate that is formed spontaneously from chanoclavine-I aldehyde in the presence of glutathione. The presence of easA is not required to complete this reaction. Further conversion of agroclavine to paspalic acid is a two-step process involving oxidation of agroclavine to elymoclavine and of elymoclavine to paspalic acid, the second step being performed by the elymoclavine oxidase cloA. Paspalic acid is then further converted to D-lysergic acid. Ergopeptines are assembled from D-lysergic acid and three different amino acids by the D-lysergyl-peptide-synthetases composed each of a monomudular and a trimodular nonribosomal peptide synthetase subunit. LpsB and lpsC encode the monomodular subunits responsible for D-lysergic acid activation and incorporation into the ergopeptine backbone. LpsA1 and A2 subunits encode the trimodular nonribosomal peptide synthetase assembling the tripeptide portion of ergopeptines. LpsA1 is responsible for formation of the major ergopeptine, ergotamine, and lpsA2 for alpha-ergocryptine, the minor ergopeptine of the total alkaloid mixture elaborated by C.purpurea. D-lysergyl-tripeptides are assembled by the nonribosomal peptide synthetases and released as N-(D-lysergyl-aminoacyl)-lactams. Cyclolization of the D-lysergyl-tripeptides is performed by the Fe(2+)/2-ketoglutarate-dependent dioxygenase easH which introduces a hydroxyl group into N-(D-lysergyl-aminoacyl)-lactam at alpha-C of the aminoacyl residue followed by spontaneous condensation with the terminal lactam carbonyl group. This is 4-dimethylallyltryptophan N-methyltransferase easF from Claviceps purpurea (Ergot fungus).